Consider the following 171-residue polypeptide: MTNFTFDGAHSSLEFQIKHLMVSKVKGSFDQFDVAVEGDINDFSTLKATATIIPSSINTKNEARDNHLKSGDFFGTDEFDKITFVTKSVSESKVVGDLTIKGITNEETFDVEFNGVSKNPMDGSQVTGIIVTGTINREKYGINFNQALETGGVMLGKDVKFEASAEFSISE.

Belongs to the UPF0312 family.

This is UPF0312 protein SAOUHSC_03022 from Staphylococcus aureus (strain NCTC 8325 / PS 47).